We begin with the raw amino-acid sequence, 193 residues long: Thymidine kinase (193 aa).

ATP contacts are provided by residues 16-23 (GPMFSGKS) and 89-92 (DEIQ). Glu90 functions as the Proton acceptor in the catalytic mechanism. Cys146, Cys149, Cys184, and Cys187 together coordinate Zn(2+).

It belongs to the thymidine kinase family. Homotetramer.

The protein resides in the cytoplasm. The enzyme catalyses thymidine + ATP = dTMP + ADP + H(+). This Thermoanaerobacter pseudethanolicus (strain ATCC 33223 / 39E) (Clostridium thermohydrosulfuricum) protein is Thymidine kinase.